The primary structure comprises 232 residues: Orotidine 5'-phosphate decarboxylase (232 aa).

Residues D11, K33, 60 to 69 (DLKFHDIPHT), T119, R180, Q189, G209, and R210 each bind substrate. The Proton donor role is filled by K62.

Belongs to the OMP decarboxylase family. Type 1 subfamily. In terms of assembly, homodimer.

The catalysed reaction is orotidine 5'-phosphate + H(+) = UMP + CO2. It participates in pyrimidine metabolism; UMP biosynthesis via de novo pathway; UMP from orotate: step 2/2. Its function is as follows. Catalyzes the decarboxylation of orotidine 5'-monophosphate (OMP) to uridine 5'-monophosphate (UMP). This is Orotidine 5'-phosphate decarboxylase from Nitrosococcus oceani (strain ATCC 19707 / BCRC 17464 / JCM 30415 / NCIMB 11848 / C-107).